A 481-amino-acid chain; its full sequence is Cerebral cavernous malformations 2 protein-like (481 aa).

Disordered stretches follow at residues 161–193 (PVPA…GTAE) and 214–290 (EARA…DPQN). The segment covering 184 to 193 (PEKRRVGTAE) has biased composition (basic and acidic residues). Residues 214–223 (EARAAGGGGS) show a composition bias toward gly residues. Basic and acidic residues predominate over residues 237–251 (WERRQTFSGSWERRH).

Belongs to the CCM2 family.

This chain is Cerebral cavernous malformations 2 protein-like (Ccm2l), found in Mus musculus (Mouse).